Reading from the N-terminus, the 310-residue chain is Olfactory receptor 9A2 (310 aa).

At 1-24 (MMDNHSSATEFHLLGFPGSQGLHH) the chain is on the extracellular side. N-linked (GlcNAc...) asparagine glycosylation is present at Asn-4. Residues 25–45 (ILFAIFFFFYLVTLMGNTVII) form a helical membrane-spanning segment. Residues 46-53 (VIVCVDKR) are Cytoplasmic-facing. A helical membrane pass occupies residues 54–74 (LQSPMYFFLSHLSTLEILVTT). Residues 75 to 98 (IIVPMMLWGLLFLGCRQYLSLHVS) are Extracellular-facing. Topologically, residues 117-135 (DRYVAVCNPLRYNIIMNSS) are cytoplasmic. Residues 136 to 156 (TCIWVVIVSWVFGFLSEIWPI) form a helical membrane-spanning segment. Over 157–193 (YATFQFTFRKSNSLDHFYCDRGQLLKLSCDNTLLTEF) the chain is Extracellular. A helical membrane pass occupies residues 194-213 (ILFLMAVFILIGSLIPTIVS). Residues 214 to 233 (YTYIISTILKIPSASGRRKA) lie on the Cytoplasmic side of the membrane. Residues 234-254 (FSTFASHFTCVVIGYGSCLFL) form a helical membrane-spanning segment. Over 255–267 (YVKPKQTQGVEYN) the chain is Extracellular. Residues 268–288 (KIVSLLVSVLTPFLNPFIFTL) form a helical membrane-spanning segment. Residues 289–310 (RNDKVKEALRDGMKRCCQLLKD) lie on the Cytoplasmic side of the membrane.

This sequence belongs to the G-protein coupled receptor 1 family.

Its subcellular location is the cell membrane. In terms of biological role, odorant receptor. The polypeptide is Olfactory receptor 9A2 (OR9A2) (Homo sapiens (Human)).